The chain runs to 1168 residues: DNA-directed RNA polymerase subunit beta (1168 aa).

The protein belongs to the RNA polymerase beta chain family. As to quaternary structure, the RNAP catalytic core consists of 2 alpha, 1 beta, 1 beta' and 1 omega subunit. When a sigma factor is associated with the core the holoenzyme is formed, which can initiate transcription.

The enzyme catalyses RNA(n) + a ribonucleoside 5'-triphosphate = RNA(n+1) + diphosphate. In terms of biological role, DNA-dependent RNA polymerase catalyzes the transcription of DNA into RNA using the four ribonucleoside triphosphates as substrates. The polypeptide is DNA-directed RNA polymerase subunit beta (Rhodococcus jostii (strain RHA1)).